We begin with the raw amino-acid sequence, 273 residues long: Dermonecrotic toxin LapSicTox-alphaIB1aiv (273 aa).

Residue histidine 5 is part of the active site. Mg(2+) contacts are provided by glutamate 25 and aspartate 27. Catalysis depends on histidine 41, which acts as the Nucleophile. 2 disulfide bridges follow: cysteine 45-cysteine 51 and cysteine 47-cysteine 190. Aspartate 85 is a binding site for Mg(2+). Residue asparagine 250 is glycosylated (N-linked (GlcNAc...) asparagine).

The protein belongs to the arthropod phospholipase D family. Class II subfamily. Mg(2+) serves as cofactor. In terms of tissue distribution, expressed by the venom gland.

It is found in the secreted. The enzyme catalyses an N-(acyl)-sphingosylphosphocholine = an N-(acyl)-sphingosyl-1,3-cyclic phosphate + choline. It carries out the reaction an N-(acyl)-sphingosylphosphoethanolamine = an N-(acyl)-sphingosyl-1,3-cyclic phosphate + ethanolamine. The catalysed reaction is a 1-acyl-sn-glycero-3-phosphocholine = a 1-acyl-sn-glycero-2,3-cyclic phosphate + choline. It catalyses the reaction a 1-acyl-sn-glycero-3-phosphoethanolamine = a 1-acyl-sn-glycero-2,3-cyclic phosphate + ethanolamine. Dermonecrotic toxins cleave the phosphodiester linkage between the phosphate and headgroup of certain phospholipids (sphingolipid and lysolipid substrates), forming an alcohol (often choline) and a cyclic phosphate. This toxin acts on sphingomyelin (SM). It may also act on ceramide phosphoethanolamine (CPE), lysophosphatidylcholine (LPC) and lysophosphatidylethanolamine (LPE), but not on lysophosphatidylserine (LPS), and lysophosphatidylglycerol (LPG). It acts by transphosphatidylation, releasing exclusively cyclic phosphate products as second products. Induces dermonecrosis, hemolysis, increased vascular permeability, edema, inflammatory response, and platelet aggregation. The polypeptide is Dermonecrotic toxin LapSicTox-alphaIB1aiv (Loxosceles apachea (Apache recluse spider)).